The following is a 222-amino-acid chain: UPF0758 protein TM_1557 (222 aa).

The region spanning 101 to 222 (KLDSSVKVYK…YFSFREEGEL (122 aa)) is the MPN domain. Zn(2+) contacts are provided by H171, H173, and D184. Residues 171 to 184 (HNHPSGDPTPSKED) carry the JAMM motif motif.

The protein belongs to the UPF0758 family.

The polypeptide is UPF0758 protein TM_1557 (Thermotoga maritima (strain ATCC 43589 / DSM 3109 / JCM 10099 / NBRC 100826 / MSB8)).